The following is a 143-amino-acid chain: Methylglyoxal synthase (143 aa).

Residues 1–143 (MTVKKIALVA…DYEAYRNRII (143 aa)) enclose the MGS-like domain. Substrate is bound by residues H11, K15, 37-40 (TGST), and 57-58 (SG). D63 (proton donor/acceptor) is an active-site residue. A substrate-binding site is contributed by H90.

The protein belongs to the methylglyoxal synthase family.

The catalysed reaction is dihydroxyacetone phosphate = methylglyoxal + phosphate. Functionally, catalyzes the formation of methylglyoxal from dihydroxyacetone phosphate. The sequence is that of Methylglyoxal synthase from Coxiella burnetii (strain Dugway 5J108-111).